The chain runs to 158 residues: 2S seed storage albumin protein (158 aa).

A signal peptide spans 1–21 (MTKFTILLISLLFCIAHTCSA). The Cell attachment site signature appears at 54–56 (RGD). Positions 65 to 81 (NHILRTMRGRINYIRRN) are excised as a propeptide.

The protein belongs to the 2S seed storage albumins family. In terms of assembly, the protein consists of two chains linked by 2 disulfide bonds. In terms of tissue distribution, expressed in cotyledons. Maximal expression in parenchyma cells undergoing DNA endoreduplication and cell expansion but not in actively dividing cells of the cotyledon.

Its function is as follows. This is a 2S seed storage protein. In terms of biological role, binds to mammalian chromatin, preventing the normal formation of the kinetochore complex in the centromere and leading to the disruption of mitosis. The protein is 2S seed storage albumin protein of Glycine max (Soybean).